A 38-amino-acid chain; its full sequence is Photosystem II reaction center protein L (38 aa).

The helical transmembrane segment at 17-37 threads the bilayer; that stretch reads SLFWGLLLIFVLAILFSSYIF.

It belongs to the PsbL family. As to quaternary structure, PSII is composed of 1 copy each of membrane proteins PsbA, PsbB, PsbC, PsbD, PsbE, PsbF, PsbH, PsbI, PsbJ, PsbK, PsbL, PsbM, PsbT, PsbX, PsbY, PsbZ, Psb30/Ycf12, at least 3 peripheral proteins of the oxygen-evolving complex and a large number of cofactors. It forms dimeric complexes.

It localises to the plastid. The protein localises to the cyanelle thylakoid membrane. Its function is as follows. One of the components of the core complex of photosystem II (PSII). PSII is a light-driven water:plastoquinone oxidoreductase that uses light energy to abstract electrons from H(2)O, generating O(2) and a proton gradient subsequently used for ATP formation. It consists of a core antenna complex that captures photons, and an electron transfer chain that converts photonic excitation into a charge separation. This subunit is found at the monomer-monomer interface and is required for correct PSII assembly and/or dimerization. The polypeptide is Photosystem II reaction center protein L (Cyanophora paradoxa).